A 202-amino-acid chain; its full sequence is Peptidyl-tRNA hydrolase (202 aa).

Tyr-17 contributes to the tRNA binding site. The Proton acceptor role is filled by His-22. The tRNA site is built by Phe-76, Asn-78, and Asn-124.

Belongs to the PTH family. Monomer.

It is found in the cytoplasm. The enzyme catalyses an N-acyl-L-alpha-aminoacyl-tRNA + H2O = an N-acyl-L-amino acid + a tRNA + H(+). In terms of biological role, hydrolyzes ribosome-free peptidyl-tRNAs (with 1 or more amino acids incorporated), which drop off the ribosome during protein synthesis, or as a result of ribosome stalling. Catalyzes the release of premature peptidyl moieties from peptidyl-tRNA molecules trapped in stalled 50S ribosomal subunits, and thus maintains levels of free tRNAs and 50S ribosomes. The chain is Peptidyl-tRNA hydrolase from Nitratidesulfovibrio vulgaris (strain DSM 19637 / Miyazaki F) (Desulfovibrio vulgaris).